We begin with the raw amino-acid sequence, 461 residues long: Bifunctional protein GlmU (461 aa).

The pyrophosphorylase stretch occupies residues 1 to 234 (MSLSVVILAA…EIEVEGANNR (234 aa)). Residues 8–11 (LAAG), Lys22, Gln77, 82–83 (GT), 104–106 (YGD), Gly141, Glu159, Asn174, and Asn232 each bind UDP-N-acetyl-alpha-D-glucosamine. Position 106 (Asp106) interacts with Mg(2+). Asn232 is a Mg(2+) binding site. The linker stretch occupies residues 235-255 (VQLATLERAYQARIAEELMIA). The segment at 256–461 (GASLRDPARI…AGWQRPVKKS (206 aa)) is N-acetyltransferase. The UDP-N-acetyl-alpha-D-glucosamine site is built by Arg338 and Lys356. Residue His368 is the Proton acceptor of the active site. 2 residues coordinate UDP-N-acetyl-alpha-D-glucosamine: Tyr371 and Asn382. Acetyl-CoA contacts are provided by residues Ala385, 391–392 (NY), Ser410, Ala428, and Arg445.

It in the N-terminal section; belongs to the N-acetylglucosamine-1-phosphate uridyltransferase family. This sequence in the C-terminal section; belongs to the transferase hexapeptide repeat family. As to quaternary structure, homotrimer. It depends on Mg(2+) as a cofactor.

The protein localises to the cytoplasm. The enzyme catalyses alpha-D-glucosamine 1-phosphate + acetyl-CoA = N-acetyl-alpha-D-glucosamine 1-phosphate + CoA + H(+). It carries out the reaction N-acetyl-alpha-D-glucosamine 1-phosphate + UTP + H(+) = UDP-N-acetyl-alpha-D-glucosamine + diphosphate. The protein operates within nucleotide-sugar biosynthesis; UDP-N-acetyl-alpha-D-glucosamine biosynthesis; N-acetyl-alpha-D-glucosamine 1-phosphate from alpha-D-glucosamine 6-phosphate (route II): step 2/2. It functions in the pathway nucleotide-sugar biosynthesis; UDP-N-acetyl-alpha-D-glucosamine biosynthesis; UDP-N-acetyl-alpha-D-glucosamine from N-acetyl-alpha-D-glucosamine 1-phosphate: step 1/1. It participates in bacterial outer membrane biogenesis; LPS lipid A biosynthesis. Catalyzes the last two sequential reactions in the de novo biosynthetic pathway for UDP-N-acetylglucosamine (UDP-GlcNAc). The C-terminal domain catalyzes the transfer of acetyl group from acetyl coenzyme A to glucosamine-1-phosphate (GlcN-1-P) to produce N-acetylglucosamine-1-phosphate (GlcNAc-1-P), which is converted into UDP-GlcNAc by the transfer of uridine 5-monophosphate (from uridine 5-triphosphate), a reaction catalyzed by the N-terminal domain. This chain is Bifunctional protein GlmU, found in Colwellia psychrerythraea (strain 34H / ATCC BAA-681) (Vibrio psychroerythus).